A 156-amino-acid chain; its full sequence is Ribosome maturation factor RimP (156 aa).

This sequence belongs to the RimP family.

It is found in the cytoplasm. In terms of biological role, required for maturation of 30S ribosomal subunits. In Lysinibacillus sphaericus (strain C3-41), this protein is Ribosome maturation factor RimP.